The sequence spans 72 residues: Translation initiation factor IF-1 (72 aa).

The S1-like domain occupies 1-72 (MARDDVIEVD…DRGRITFRYK (72 aa)).

Belongs to the IF-1 family. Component of the 30S ribosomal translation pre-initiation complex which assembles on the 30S ribosome in the order IF-2 and IF-3, IF-1 and N-formylmethionyl-tRNA(fMet); mRNA recruitment can occur at any time during PIC assembly.

It localises to the cytoplasm. In terms of biological role, one of the essential components for the initiation of protein synthesis. Stabilizes the binding of IF-2 and IF-3 on the 30S subunit to which N-formylmethionyl-tRNA(fMet) subsequently binds. Helps modulate mRNA selection, yielding the 30S pre-initiation complex (PIC). Upon addition of the 50S ribosomal subunit IF-1, IF-2 and IF-3 are released leaving the mature 70S translation initiation complex. The protein is Translation initiation factor IF-1 of Helicobacter acinonychis (strain Sheeba).